Consider the following 166-residue polypeptide: uncharacterized protein (166 aa).

Pentapeptide repeat domains are found at residues 38–77 (GECL…NLRR), 78–117 (ALLD…NLER), and 118–157 (SFLR…EFWE).

This is an uncharacterized protein from Synechocystis sp. (strain ATCC 27184 / PCC 6803 / Kazusa).